The primary structure comprises 288 residues: MVGVGGGDVEDVTPRPGGCQISGRGARGCNGIPGAAAWEAALPRRRPRRHPSVNPRSRAAGSPRTRGRRTEERPSGSRLGDRGRGRALPGGRLGGRGRGRAPERVGGRGRGRGTAAPRAAPAARGSRPGPAGTMAAGSITTLPALPEDGGSGAFPPGHFKDPKRLYCKNGGFFLRIHPDGRVDGVREKSDPHIKLQLQAEERGVVSIKGVCANRYLAMKEDGRLLASKCVTDECFFFERLESNNYNTYRSRKYTSWYVALKRTGQYKLGSKTGPGQKAILFLPMSAKS.

Residues methionine 1–threonine 133 are disordered. A propeptide spans methionine 1–leucine 142 (or 93, or 124, or 125, or 131, or 161). Over residues serine 52 to arginine 64 the composition is skewed to low complexity. Basic and acidic residues predominate over residues arginine 68–arginine 84. An omega-N-methylarginine; alternate mark is found at arginine 108, arginine 110, and arginine 112. 3 positions are modified to symmetric dimethylarginine; alternate: arginine 108, arginine 110, and arginine 112. The span at glycine 113–glycine 132 shows a compositional bias: low complexity. Asparagine 169 lines the heparin pocket. The short motif at aspartate 179–arginine 181 is the Cell attachment site; atypical element. Tyrosine 215 carries the post-translational modification Phosphotyrosine; by TEC. The short motif at aspartate 221–arginine 223 is the Cell attachment site; atypical element. Residue lysine 228 forms a Glycyl lysine isopeptide (Lys-Gly) (interchain with G-Cter in SUMO1) linkage. A heparin-binding region spans residues lysine 261–lysine 277.

The protein belongs to the heparin-binding growth factors family. In terms of assembly, monomer. Homodimer. Interacts with FGFR1, FGFR2, FGFR3 and FGFR4. Affinity between fibroblast growth factors (FGFs) and their receptors is increased by heparan sulfate glycosaminoglycans that function as coreceptors. Interacts with CSPG4, FGFBP1 and TEC. Found in a complex with FGFBP1, FGF1 and FGF2. Interacts with FGFBP3. Interacts with integrin ITGAV:ITGB3; the interaction is required for FGF2 signaling. Interacts with SNORC (via the extracellular domain). Interacts with glypican GPC3. In terms of processing, phosphorylation at Tyr-215 regulates FGF2 unconventional secretion. Several N-termini starting at positions 94, 125, 126, 132, 143 and 162 have been identified by direct sequencing. In terms of tissue distribution, expressed in granulosa and cumulus cells. Expressed in hepatocellular carcinoma cells, but not in non-cancerous liver tissue.

Its subcellular location is the secreted. It is found in the nucleus. Functionally, acts as a ligand for FGFR1, FGFR2, FGFR3 and FGFR4. Also acts as an integrin ligand which is required for FGF2 signaling. Binds to integrin ITGAV:ITGB3. Plays an important role in the regulation of cell survival, cell division, cell differentiation and cell migration. Functions as a potent mitogen in vitro. Can induce angiogenesis. Mediates phosphorylation of ERK1/2 and thereby promotes retinal lens fiber differentiation. This Homo sapiens (Human) protein is Fibroblast growth factor 2 (FGF2).